A 364-amino-acid polypeptide reads, in one-letter code: Phosphoserine aminotransferase (364 aa).

Arg41 contacts L-glutamate. Pyridoxal 5'-phosphate contacts are provided by residues 75-76 (AS), Trp100, Thr155, Asp175, and Gln198. Lys199 carries the N6-(pyridoxal phosphate)lysine modification. 239 to 240 (NT) contributes to the pyridoxal 5'-phosphate binding site.

Belongs to the class-V pyridoxal-phosphate-dependent aminotransferase family. SerC subfamily. In terms of assembly, homodimer. It depends on pyridoxal 5'-phosphate as a cofactor.

The protein localises to the cytoplasm. It carries out the reaction O-phospho-L-serine + 2-oxoglutarate = 3-phosphooxypyruvate + L-glutamate. The enzyme catalyses 4-(phosphooxy)-L-threonine + 2-oxoglutarate = (R)-3-hydroxy-2-oxo-4-phosphooxybutanoate + L-glutamate. The protein operates within amino-acid biosynthesis; L-serine biosynthesis; L-serine from 3-phospho-D-glycerate: step 2/3. Its function is as follows. Catalyzes the reversible conversion of 3-phosphohydroxypyruvate to phosphoserine and of 3-hydroxy-2-oxo-4-phosphonooxybutanoate to phosphohydroxythreonine. The sequence is that of Phosphoserine aminotransferase from Streptococcus thermophilus (strain CNRZ 1066).